The following is an 876-amino-acid chain: Phosphoenolpyruvate carboxylase (876 aa).

Catalysis depends on residues H138 and K543.

This sequence belongs to the PEPCase type 1 family. Mg(2+) is required as a cofactor.

The catalysed reaction is oxaloacetate + phosphate = phosphoenolpyruvate + hydrogencarbonate. In terms of biological role, forms oxaloacetate, a four-carbon dicarboxylic acid source for the tricarboxylic acid cycle. The chain is Phosphoenolpyruvate carboxylase from Pseudomonas fluorescens (strain Pf0-1).